Here is a 185-residue protein sequence, read N- to C-terminus: Translation initiation factor IF-3 (185 aa).

Belongs to the IF-3 family. In terms of assembly, monomer.

It is found in the cytoplasm. Its function is as follows. IF-3 binds to the 30S ribosomal subunit and shifts the equilibrium between 70S ribosomes and their 50S and 30S subunits in favor of the free subunits, thus enhancing the availability of 30S subunits on which protein synthesis initiation begins. The polypeptide is Translation initiation factor IF-3 (Streptococcus pneumoniae serotype 19F (strain G54)).